The sequence spans 391 residues: Multidrug resistance protein MdtL (391 aa).

12 consecutive transmembrane segments (helical) span residues 4-24 (FLIC…MYLV), 42-62 (IAFS…GKVA), 69-89 (PVAI…SLAE), 93-113 (LFLA…VVAF), 134-154 (GITC…MLNF), 158-178 (SLFW…LFIL), 203-222 (FFLS…LTFV), 245-265 (ALTA…LGIF), 269-289 (TLMI…AVSP), 293-313 (VSLF…GVAM), 331-351 (LGIA…VVGI), and 356-376 (MLIG…MFVA).

It belongs to the major facilitator superfamily. DHA1 family. MdtL (TC 2.A.1.2.22) subfamily.

The protein localises to the cell inner membrane. In terms of biological role, confers resistance to chloramphenicol. The sequence is that of Multidrug resistance protein MdtL from Escherichia coli O81 (strain ED1a).